Here is an 89-residue protein sequence, read N- to C-terminus: Small ribosomal subunit protein uS14A (89 aa).

Residues 34–54 (ESLRKLPRDSNPNRLKNRDKI) form a disordered region.

This sequence belongs to the universal ribosomal protein uS14 family. As to quaternary structure, part of the 30S ribosomal subunit. Contacts proteins S3 and S10.

In terms of biological role, binds 16S rRNA, required for the assembly of 30S particles and may also be responsible for determining the conformation of the 16S rRNA at the A site. The sequence is that of Small ribosomal subunit protein uS14A from Streptococcus pyogenes serotype M1.